The chain runs to 141 residues: Nucleoside diphosphate kinase (141 aa).

Residues Lys9, Phe57, Arg85, Thr91, Arg102, and Asn112 each contribute to the ATP site. Residue His115 is the Pros-phosphohistidine intermediate of the active site.

The protein belongs to the NDK family. As to quaternary structure, homotetramer. Mg(2+) is required as a cofactor.

It localises to the cytoplasm. The enzyme catalyses a 2'-deoxyribonucleoside 5'-diphosphate + ATP = a 2'-deoxyribonucleoside 5'-triphosphate + ADP. The catalysed reaction is a ribonucleoside 5'-diphosphate + ATP = a ribonucleoside 5'-triphosphate + ADP. Functionally, major role in the synthesis of nucleoside triphosphates other than ATP. The ATP gamma phosphate is transferred to the NDP beta phosphate via a ping-pong mechanism, using a phosphorylated active-site intermediate. The polypeptide is Nucleoside diphosphate kinase (Chlamydia abortus (strain DSM 27085 / S26/3) (Chlamydophila abortus)).